The chain runs to 363 residues: NAD(P)H-quinone oxidoreductase subunit 1, chloroplastic (363 aa).

7 helical membrane passes run 28 to 48 (WVLA…LVIV), 98 to 118 (FSIG…VIPF), 129 to 149 (IGIF…LMSG), 253 to 273 (FGLF…FVTV), 274 to 294 (LYLG…LVEI), 300 to 320 (IFGT…FLFI), and 336 to 356 (LLNL…LLTT).

This sequence belongs to the complex I subunit 1 family. NDH is composed of at least 16 different subunits, 5 of which are encoded in the nucleus.

It localises to the plastid. Its subcellular location is the chloroplast thylakoid membrane. The enzyme catalyses a plastoquinone + NADH + (n+1) H(+)(in) = a plastoquinol + NAD(+) + n H(+)(out). It catalyses the reaction a plastoquinone + NADPH + (n+1) H(+)(in) = a plastoquinol + NADP(+) + n H(+)(out). Functionally, NDH shuttles electrons from NAD(P)H:plastoquinone, via FMN and iron-sulfur (Fe-S) centers, to quinones in the photosynthetic chain and possibly in a chloroplast respiratory chain. The immediate electron acceptor for the enzyme in this species is believed to be plastoquinone. Couples the redox reaction to proton translocation, and thus conserves the redox energy in a proton gradient. This Citrus sinensis (Sweet orange) protein is NAD(P)H-quinone oxidoreductase subunit 1, chloroplastic.